We begin with the raw amino-acid sequence, 146 residues long: Large ribosomal subunit protein uL13 (146 aa).

Residues 126-146 form a disordered region; it reads AGPKHPHAAQQPKVYEPRPRG.

It belongs to the universal ribosomal protein uL13 family. In terms of assembly, part of the 50S ribosomal subunit.

In terms of biological role, this protein is one of the early assembly proteins of the 50S ribosomal subunit, although it is not seen to bind rRNA by itself. It is important during the early stages of 50S assembly. The protein is Large ribosomal subunit protein uL13 of Roseiflexus castenholzii (strain DSM 13941 / HLO8).